We begin with the raw amino-acid sequence, 416 residues long: uncharacterized protein (416 aa).

In terms of domain architecture, N-acetyltransferase spans 3–150; the sequence is LDVRTITPSE…SVYRAGLDAR (148 aa). Residues 83–85 and 91–96 each bind acetyl-CoA; these read VTV and RRGLLS. The Proton donor role is filled by Tyr-124. The active-site Proton acceptor; via carboxylate is the Phe-416.

It belongs to the acetyltransferase Eis family. In terms of assembly, homohexamer; trimer of dimers.

This is an uncharacterized protein from Streptomyces griseus subsp. griseus (strain JCM 4626 / CBS 651.72 / NBRC 13350 / KCC S-0626 / ISP 5235).